The sequence spans 596 residues: Polyphenol oxidase B, chloroplastic (596 aa).

The interval 1–23 (MASVVCNSSSSTTTTTLKTPFTS) is disordered. The transit peptide at 1–87 (MASVVCNSSS…ANAIPLAASA (87 aa)) directs the protein to the chloroplast. Residues 8 to 23 (SSSSTTTTTLKTPFTS) are compositionally biased toward low complexity. 2 disulfides stabilise this stretch: Cys98–Cys114 and Cys113–Cys182. Positions 181, 199, 208, 329, 333, and 371 each coordinate Cu cation. Positions 185 to 199 (CNGAYIIGGKELQVH) form a cross-link, 2'-(S-cysteinyl)-histidine (Cys-His).

The protein belongs to the tyrosinase family. It depends on Cu(2+) as a cofactor.

Its subcellular location is the plastid. It is found in the chloroplast thylakoid lumen. The enzyme catalyses 2 catechol + O2 = 2 1,2-benzoquinone + 2 H2O. Catalyzes the oxidation of mono- and o-diphenols to o-diquinones. This Solanum lycopersicum (Tomato) protein is Polyphenol oxidase B, chloroplastic.